Reading from the N-terminus, the 69-residue chain is MLYKDIKVSHLMNSNDELQKLVKDFEAELWTLNFKKSVGSLDQSHKIRAIRRDIARIKTELNAREKGAK.

The protein belongs to the universal ribosomal protein uL29 family.

The chain is Large ribosomal subunit protein uL29 from Mycoplasmopsis agalactiae (strain NCTC 10123 / CIP 59.7 / PG2) (Mycoplasma agalactiae).